The chain runs to 141 residues: Putative pre-16S rRNA nuclease (141 aa).

Belongs to the YqgF nuclease family.

It is found in the cytoplasm. Could be a nuclease involved in processing of the 5'-end of pre-16S rRNA. In Desulforudis audaxviator (strain MP104C), this protein is Putative pre-16S rRNA nuclease.